Here is a 419-residue protein sequence, read N- to C-terminus: eIF5-mimic protein 2 (419 aa).

Met1 is subject to N-acetylmethionine. The span at Met1–Arg15 shows a compositional bias: polar residues. The segment at Met1–Arg26 is disordered. Position 12 is a phosphoserine (Ser12). The W2 domain maps to Asn247 to Glu414. Lys368 participates in a covalent cross-link: Glycyl lysine isopeptide (Lys-Gly) (interchain with G-Cter in SUMO2). Ser411 and Ser413 each carry phosphoserine.

This sequence belongs to the BZW family.

Translation initiation regulator which represses repeat-associated non-AUG (RAN) initiated translation probably by acting as a competitive inhibitor of eukaryotic translation initiation factor 5 (EIF5) function. Enhances histone H4 gene transcription but does not seem to bind DNA directly. This Homo sapiens (Human) protein is eIF5-mimic protein 2 (BZW1).